A 397-amino-acid chain; its full sequence is MQSPYVREAVREMDLPDEVIVYDTTLRDGEQTPGVSFTPEQKLEIAHLLDELGVQQIEAGFPVVSEGERDAVRRIAHEGLNADILCLARTLRGDVDAALDCDVDGVITFIATSELHLKHKLRMSREEVLERIADTVEYAKDHGLWVAFSAEDGTRTEFEFLERVYRTAEECGADRVHATDTVGVMIPAAMRLFVAKIREVVDLPIGVHCHDDFGMAVANSLAAVEAGAQAISTTVNGIGERAGNAALEEVIMALKELYGIDPGFNTEVLAELSRKVSEYSGIDVPPNKAVVGENAFRHESGIHVAAVLEEPRTYEPIDPKEVGMNRKIVLGKHTGRKAVVAKLEELGVEPEEEIVEEVLKRIKALGDRRVRVTDSKLEEIVRNVLESRGDRDDPGSR.

Positions 19–270 (VIVYDTTLRD…DPGFNTEVLA (252 aa)) constitute a Pyruvate carboxyltransferase domain.

It belongs to the alpha-IPM synthase/homocitrate synthase family.

The enzyme catalyses acetyl-CoA + 2-oxoglutarate + H2O = (2R)-homocitrate + CoA + H(+). The catalysed reaction is 2-oxoadipate + acetyl-CoA + H2O = (R)-dihomocitrate + CoA + H(+). It carries out the reaction 2-oxoheptanedioate + acetyl-CoA + H2O = (R)-trihomocitrate + CoA + H(+). Its pathway is organic acid metabolism; 2-oxosuberate biosynthesis. Catalyzes the condensation of alpha-ketoglutarate and acetyl-CoA to form (R)-homocitrate. Can also catalyze the condensation of alpha-ketoadipate with acetyl-CoA to form (R)-homo(2)citrate, and the condensation of alpha-ketopimelate with acetyl-CoA to form (R)-homo(3)citrate. These reactions are part of the biosynthesis pathway of coenzyme B and biotin. This is Homocitrate synthase AksA (aksA) from Methanopyrus kandleri (strain AV19 / DSM 6324 / JCM 9639 / NBRC 100938).